We begin with the raw amino-acid sequence, 603 residues long: Elongation factor 4 (603 aa).

The region spanning 7–191 (DNIRNFSIVA…AIVTRLPPPQ (185 aa)) is the tr-type G domain. GTP-binding positions include 19–24 (DHGKST) and 138–141 (NKVD).

It belongs to the TRAFAC class translation factor GTPase superfamily. Classic translation factor GTPase family. LepA subfamily.

It is found in the cell inner membrane. It catalyses the reaction GTP + H2O = GDP + phosphate + H(+). Its function is as follows. Required for accurate and efficient protein synthesis under certain stress conditions. May act as a fidelity factor of the translation reaction, by catalyzing a one-codon backward translocation of tRNAs on improperly translocated ribosomes. Back-translocation proceeds from a post-translocation (POST) complex to a pre-translocation (PRE) complex, thus giving elongation factor G a second chance to translocate the tRNAs correctly. Binds to ribosomes in a GTP-dependent manner. This is Elongation factor 4 from Rhodopseudomonas palustris (strain HaA2).